The primary structure comprises 435 residues: MRKIIAGVFIFVFLISNLYADLVAEVTTGVIQKPLVTVVSDNVVDQFPQQVNSVMVADLNHNAKLQANDTIKYEIKQKQNIPWKSLKSDYVVLTKYTNNSYNNYTVEVQILKRNDTSYLQAITYKNINVSLMRTLAHKISNYVYQKLTGNQGFFLTKLAYVKVSNLYARYGRLYELIISDYDGYNKHVVLRQTDNPIATPSWSNDGRYIVYSSYSGGSMGVYTLEIATGKVTRITNYKGINSSPSFSPDGKEIALALSKGYSDQTNIYIMNLATKALKRITINGINTAPKFSPNGQSIVFTSDREGRPNIYVASVNSKYPQSSILSTKIHQAYEPNYTPDGKNIVFMNQSSRTSGTQIADFNLVNGSVTNITNGKADSSPTVSPYGDMVAYISTNTRGYSSLDMVSLDGDNHFNIETADNGNILIQSPSWSPKNF.

Residues 1–20 (MRKIIAGVFIFVFLISNLYA) form the signal peptide.

It belongs to the TolB family. As to quaternary structure, the Tol-Pal system is composed of five core proteins: the inner membrane proteins TolA, TolQ and TolR, the periplasmic protein TolB and the outer membrane protein Pal. They form a network linking the inner and outer membranes and the peptidoglycan layer.

It localises to the periplasm. Functionally, part of the Tol-Pal system, which plays a role in outer membrane invagination during cell division and is important for maintaining outer membrane integrity. This is Tol-Pal system protein TolB from Francisella tularensis subsp. holarctica (strain LVS).